The sequence spans 375 residues: Fructose-1,6-bisphosphate aldolase/phosphatase (375 aa).

Aspartate 15 acts as the Proton acceptor; for FBP phosphatase activity in catalysis. Residues aspartate 15, histidine 22, aspartate 56, and aspartate 57 each contribute to the Mg(2+) site. Histidine 22 contacts beta-D-fructose 1,6-bisphosphate. Histidine 22 provides a ligand contact to dihydroxyacetone phosphate. Residue tyrosine 94 coordinates beta-D-fructose 1,6-bisphosphate. Position 98 (glutamine 98) interacts with Mg(2+). Glycine 107–asparagine 108 contributes to the beta-D-fructose 1,6-bisphosphate binding site. Aspartate 135 lines the Mg(2+) pocket. Lysine 136 lines the beta-D-fructose 1,6-bisphosphate pocket. Lysine 136 contributes to the dihydroxyacetone phosphate binding site. The active-site Proton donor/acceptor; for FBP aldolase activity is the tyrosine 237. Mg(2+) is bound by residues lysine 240, aspartate 241, and aspartate 242. The active-site Schiff-base intermediate with DHAP; for FBP aldolase activity is lysine 240. Residues glutamine 250 to serine 251, arginine 274, aspartate 295, and tyrosine 357 contribute to the beta-D-fructose 1,6-bisphosphate site. Dihydroxyacetone phosphate-binding residues include arginine 274 and aspartate 295.

It belongs to the FBP aldolase/phosphatase family. In terms of assembly, homooctamer; dimer of tetramers. It depends on Mg(2+) as a cofactor.

The catalysed reaction is beta-D-fructose 1,6-bisphosphate + H2O = beta-D-fructose 6-phosphate + phosphate. It carries out the reaction beta-D-fructose 1,6-bisphosphate = D-glyceraldehyde 3-phosphate + dihydroxyacetone phosphate. The protein operates within carbohydrate biosynthesis; gluconeogenesis. Its activity is regulated as follows. Activity is enhanced by dithioerythritol, and is slightly inhibited by fructose 2,6-bisphosphate. AMP does not inhibit the enzyme activity. Functionally, catalyzes two subsequent steps in gluconeogenesis: the aldol condensation of dihydroxyacetone phosphate (DHAP) and glyceraldehyde-3-phosphate (GA3P) to fructose-1,6-bisphosphate (FBP), and the dephosphorylation of FBP to fructose-6-phosphate (F6P). Does not display hydrolase activity against fructose 2,6-bisphosphate, fructose 6-phosphate, fructose 1-phosphate, glucose 6-phosphate, and glucose 1-phosphate. Exhibits only negligible activity on inositol-1-phosphate (IMP). Is essential for the growth of T.kodakaraensis under gluconeogenic conditions. This is Fructose-1,6-bisphosphate aldolase/phosphatase from Thermococcus kodakarensis (strain ATCC BAA-918 / JCM 12380 / KOD1) (Pyrococcus kodakaraensis (strain KOD1)).